A 130-amino-acid chain; its full sequence is D-ribose pyranase (130 aa).

H20 functions as the Proton donor in the catalytic mechanism. Substrate-binding positions include D28, H97, and Y119–N121.

Belongs to the RbsD / FucU family. RbsD subfamily. As to quaternary structure, homodecamer.

It is found in the cytoplasm. It catalyses the reaction beta-D-ribopyranose = beta-D-ribofuranose. It functions in the pathway carbohydrate metabolism; D-ribose degradation; D-ribose 5-phosphate from beta-D-ribopyranose: step 1/2. Its function is as follows. Catalyzes the interconversion of beta-pyran and beta-furan forms of D-ribose. The polypeptide is D-ribose pyranase (Heliobacterium modesticaldum (strain ATCC 51547 / Ice1)).